The primary structure comprises 693 residues: Probable L-type lectin-domain containing receptor kinase VI.1 (693 aa).

Positions 1-22 are cleaved as a signal peptide; the sequence is MGIARSINSFMFFFFLMILSNA. N-linked (GlcNAc...) asparagine glycans are attached at residues asparagine 21, asparagine 44, asparagine 71, asparagine 89, asparagine 141, asparagine 180, and asparagine 223. Over 23–311 the chain is Extracellular; it reads SKSSVLAEAT…SNKKGYNSQV (289 aa). Positions 33 to 279 are legume-lectin like; it reads TAKFTFIGFK…AHYVMGWSFS (247 aa). A helical transmembrane segment spans residues 312-332; that stretch reads IVLIVALSIVTLVLLVLLFIF. At 333-693 the chain is on the cytoplasmic side; the sequence is VMYKRRIQEE…VSSSSIVSGR (361 aa). A Protein kinase domain is found at 368-642; sequence FKESEIIGTG…LRYLNGEENV (275 aa). Residues 374-382 and lysine 396 contribute to the ATP site; that span reads IGTGGFGIV. The Proton acceptor role is filled by aspartate 495. The disordered stretch occupies residues 670–693; sequence DRASSSNTFSSFSNVSSSSIVSGR.

This sequence in the C-terminal section; belongs to the protein kinase superfamily. Ser/Thr protein kinase family. The protein in the N-terminal section; belongs to the leguminous lectin family.

It is found in the cell membrane. It carries out the reaction L-seryl-[protein] + ATP = O-phospho-L-seryl-[protein] + ADP + H(+). The catalysed reaction is L-threonyl-[protein] + ATP = O-phospho-L-threonyl-[protein] + ADP + H(+). This Arabidopsis thaliana (Mouse-ear cress) protein is Probable L-type lectin-domain containing receptor kinase VI.1 (LECRK61).